The following is a 248-amino-acid chain: uncharacterized protein (248 aa).

This is an uncharacterized protein from Escherichia coli (Bacteriophage T4).